A 536-amino-acid polypeptide reads, in one-letter code: Phosphoenolpyruvate carboxykinase (ATP) (536 aa).

Substrate is bound by residues Arg-63, Tyr-203, and Lys-209. ATP contacts are provided by residues Lys-209, His-228, and 244–252; that span reads GLSGTGKTT. The Mn(2+) site is built by Lys-209 and His-228. Residue Asp-265 coordinates Mn(2+). Residues Glu-293, Arg-329, 445–446, and Thr-451 each bind ATP; that span reads RI. Arg-329 is a binding site for substrate.

Belongs to the phosphoenolpyruvate carboxykinase (ATP) family. In terms of assembly, monomer. Requires Mn(2+) as cofactor.

Its subcellular location is the cytoplasm. It carries out the reaction oxaloacetate + ATP = phosphoenolpyruvate + ADP + CO2. It participates in carbohydrate biosynthesis; gluconeogenesis. Functionally, involved in the gluconeogenesis. Catalyzes the conversion of oxaloacetate (OAA) to phosphoenolpyruvate (PEP) through direct phosphoryl transfer between the nucleoside triphosphate and OAA. This Colwellia psychrerythraea (strain 34H / ATCC BAA-681) (Vibrio psychroerythus) protein is Phosphoenolpyruvate carboxykinase (ATP).